Consider the following 158-residue polypeptide: Adenosine 5'-monophosphoramidase HNT1 (158 aa).

An HIT domain is found at 26–129 (IFCKIIKSEI…IPKRDEKSGL (104 aa)). AMP contacts are provided by residues 51–52 (DI), N103, 109–111 (HQE), and 116–118 (HFH). A Histidine triad motif motif is present at residues 114–118 (HVHFH). Catalysis depends on H116, which acts as the Tele-AMP-histidine intermediate.

This sequence belongs to the HINT family. Homodimer. Interacts with KIN28. Requires Mg(2+) as cofactor.

The catalysed reaction is adenosine 5'-phosphoramidate + H2O = AMP + NH4(+). Hydrolyzes adenosine 5'-monophosphoramidate substrates such as AMP-morpholidate, AMP-N-alanine methyl ester, AMP-alpha-acetyl lysine methyl ester and AMP-NH2. Plays a role in the regulation of kinase KIN28 function. Essential for growth on galactose media at elevated temperatures. The sequence is that of Adenosine 5'-monophosphoramidase HNT1 from Saccharomyces cerevisiae (strain ATCC 204508 / S288c) (Baker's yeast).